A 397-amino-acid polypeptide reads, in one-letter code: Lysophospholipid transporter LplT (397 aa).

At 1 to 17 (MSESVHTNTSLWSKGMK) the chain is on the periplasmic side. The chain crosses the membrane as a helical span at residues 18 to 38 (AVIVAQFLSAFGDNALLFATL). Topologically, residues 39–52 (ALLNAQFYPEWSQP) are cytoplasmic. A helical membrane pass occupies residues 53 to 73 (ILQMVFVGAYILFAPFVGQVA). Topologically, residues 74-90 (DSFAKGRVMMFANGLKL) are periplasmic. A helical transmembrane segment spans residues 91-111 (LGAASICFGINPFLGYTLVGV). Residues 112–144 (GAAAYSPAKYGILGELTTGSKLVKANGLMEAST) are Cytoplasmic-facing. The helical transmembrane segment at 145–165 (IAAILLGSVAGGVLADWHVLV) threads the bilayer. Position 166 (Ala166) is a topological domain, periplasmic. Residues 167–187 (LAACALAYGGAVVANIYIPKL) traverse the membrane as a helical segment. The Cytoplasmic portion of the chain corresponds to 188-226 (AAARPGQSWNLINMTRSFLNACTSLWRNGETRFSLVGTS). Residues 227-247 (LFWGAGVTLRFLLVLWVPVAL) form a helical membrane-spanning segment. Topologically, residues 248–256 (GITDNATPT) are periplasmic. The helical transmembrane segment at 257-277 (YLNAMVAIGIVVGAGAAAKLV) threads the bilayer. Residues 278-280 (TLE) lie on the Cytoplasmic side of the membrane. A helical membrane pass occupies residues 281 to 301 (TVSRCMPAGILIGVVVLIFSL). The Periplasmic segment spans residues 302 to 304 (QHE). The chain crosses the membrane as a helical span at residues 305 to 325 (LLPAYALLMLIGVMGGFFVVP). Residues 326–343 (LNALLQERGKKSVGAGNA) lie on the Cytoplasmic side of the membrane. A helical transmembrane segment spans residues 344–364 (IAVQNLGENSAMLLMLGIYSL). Over 365–366 (AV) the chain is Periplasmic. The chain crosses the membrane as a helical span at residues 367–387 (MIGIPVVPIGIGFGALFALAI). At 388 to 397 (TALWIWQRRH) the chain is on the cytoplasmic side.

It belongs to the major facilitator superfamily. LplT (TC 2.A.1.42) family.

The protein localises to the cell inner membrane. In terms of biological role, catalyzes the facilitated diffusion of 2-acyl-glycero-3-phosphoethanolamine (2-acyl-GPE) into the cell. The protein is Lysophospholipid transporter LplT of Escherichia coli (strain SE11).